Reading from the N-terminus, the 285-residue chain is Bifunctional protein FolD (285 aa).

NADP(+)-binding positions include 166–168 (GAS) and Ile232.

It belongs to the tetrahydrofolate dehydrogenase/cyclohydrolase family. Homodimer.

The catalysed reaction is (6R)-5,10-methylene-5,6,7,8-tetrahydrofolate + NADP(+) = (6R)-5,10-methenyltetrahydrofolate + NADPH. It catalyses the reaction (6R)-5,10-methenyltetrahydrofolate + H2O = (6R)-10-formyltetrahydrofolate + H(+). The protein operates within one-carbon metabolism; tetrahydrofolate interconversion. Its function is as follows. Catalyzes the oxidation of 5,10-methylenetetrahydrofolate to 5,10-methenyltetrahydrofolate and then the hydrolysis of 5,10-methenyltetrahydrofolate to 10-formyltetrahydrofolate. The polypeptide is Bifunctional protein FolD (Vibrio atlanticus (strain LGP32) (Vibrio splendidus (strain Mel32))).